Reading from the N-terminus, the 78-residue chain is Acyl carrier protein (78 aa).

In terms of domain architecture, Carrier spans 2 to 77 (SDIEQRVKKI…QAIDYVNANL (76 aa)). The residue at position 37 (serine 37) is an O-(pantetheine 4'-phosphoryl)serine.

Belongs to the acyl carrier protein (ACP) family. In terms of processing, 4'-phosphopantetheine is transferred from CoA to a specific serine of apo-ACP by AcpS. This modification is essential for activity because fatty acids are bound in thioester linkage to the sulfhydryl of the prosthetic group.

The protein resides in the cytoplasm. It functions in the pathway lipid metabolism; fatty acid biosynthesis. Its function is as follows. Carrier of the growing fatty acid chain in fatty acid biosynthesis. The chain is Acyl carrier protein from Methylobacillus flagellatus (strain ATCC 51484 / DSM 6875 / VKM B-1610 / KT).